The chain runs to 93 residues: MGIADYFRERRRSRRGSASVAKERLQIIVSHERAERGGPDYLPMLRQELLEVVRRYVTVDPDAVRVDVERDGPHEVLELNITLPEREEEGAQR.

This sequence belongs to the MinE family.

In terms of biological role, prevents the cell division inhibition by proteins MinC and MinD at internal division sites while permitting inhibition at polar sites. This ensures cell division at the proper site by restricting the formation of a division septum at the midpoint of the long axis of the cell. The protein is Cell division topological specificity factor of Halorhodospira halophila (strain DSM 244 / SL1) (Ectothiorhodospira halophila (strain DSM 244 / SL1)).